The sequence spans 252 residues: Chitooligosaccharide deacetylase (252 aa).

His61 and His125 together coordinate Mg(2+).

This sequence belongs to the YdjC deacetylase family. ChbG subfamily. As to quaternary structure, homodimer. Requires Mg(2+) as cofactor.

The protein resides in the cytoplasm. The catalysed reaction is N,N'-diacetylchitobiose + H2O = N-acetyl-beta-D-glucosaminyl-(1-&gt;4)-D-glucosamine + acetate. It carries out the reaction diacetylchitobiose-6'-phosphate + H2O = N'-monoacetylchitobiose-6'-phosphate + acetate. It functions in the pathway glycan degradation; chitin degradation. Functionally, involved in the degradation of chitin. ChbG is essential for growth on the acetylated chitooligosaccharides chitobiose and chitotriose but is dispensable for growth on cellobiose and chitosan dimer, the deacetylated form of chitobiose. Deacetylation of chitobiose-6-P and chitotriose-6-P is necessary for both the activation of the chb promoter by the regulatory protein ChbR and the hydrolysis of phosphorylated beta-glucosides by the phospho-beta-glucosidase ChbF. Catalyzes the removal of only one acetyl group from chitobiose-6-P to yield monoacetylchitobiose-6-P, the inducer of ChbR and the substrate of ChbF. The chain is Chitooligosaccharide deacetylase from Salmonella paratyphi A (strain ATCC 9150 / SARB42).